Consider the following 814-residue polypeptide: Glycogen phosphorylase (814 aa).

Lysine 662 is modified (N6-(pyridoxal phosphate)lysine).

Belongs to the glycogen phosphorylase family. Requires pyridoxal 5'-phosphate as cofactor.

It catalyses the reaction [(1-&gt;4)-alpha-D-glucosyl](n) + phosphate = [(1-&gt;4)-alpha-D-glucosyl](n-1) + alpha-D-glucose 1-phosphate. Phosphorylase is an important allosteric enzyme in carbohydrate metabolism. Enzymes from different sources differ in their regulatory mechanisms and in their natural substrates. However, all known phosphorylases share catalytic and structural properties. This is Glycogen phosphorylase (glgP) from Chlamydia trachomatis serovar D (strain ATCC VR-885 / DSM 19411 / UW-3/Cx).